A 329-amino-acid chain; its full sequence is MKPLMLQGHQRAITQIKYNREGDLLFSAAKDSKPNVWWSLNGERLGTFNGHGGVIWCLDVDWQSINLITGGGDSSCRLWDLETGKNIATLKSNSSVRTCNFSYSAYQAAYTTDKAMGHPCEVFVIDTRTIDETVSGQAPILKWEITDSKVTSMIWGSLDETIITGHEAGDLIQWDLRTGKKIHSVKEHTHQITDMQLSRDGTMFVTASKDHTAKLFDTNSLELLKEYKTERPVNSAALSPILDHVVLGGGQDAMEVTTTSTRQGKFDARFFHLVFEEEFGRVKGHFGPINSLAFHPDGKSYASGGEDGYVRVHNFDQSYFDYTFDYNRE.

5 WD repeats span residues 8–47, 50–89, 145–184, 187–226, and 284–323; these read GHQR…RLGT, GHGG…NIAT, ITDS…KIHS, EHTH…LLKE, and GHFG…FDYT.

It belongs to the eIF-3 subunit I family. As to quaternary structure, component of the eukaryotic translation initiation factor 3 (eIF-3) complex.

The protein resides in the cytoplasm. In terms of biological role, component of the eukaryotic translation initiation factor 3 (eIF-3) complex, which is involved in protein synthesis of a specialized repertoire of mRNAs and, together with other initiation factors, stimulates binding of mRNA and methionyl-tRNAi to the 40S ribosome. The eIF-3 complex specifically targets and initiates translation of a subset of mRNAs involved in cell proliferation. The chain is Eukaryotic translation initiation factor 3 subunit I from Bombyx mori (Silk moth).